The primary structure comprises 94 residues: uncharacterized protein (94 aa).

As to expression, specifically expressed in retina and retinal pigment epithelium.

This is an uncharacterized protein from Homo sapiens (Human).